The primary structure comprises 35 residues: Augerpeptide hheTx5 (35 aa).

In terms of processing, contains 4 disulfide bonds. As to expression, expressed by the venom duct.

The protein localises to the secreted. The protein is Augerpeptide hheTx5 of Hastula hectica (Sea snail).